The chain runs to 422 residues: MQRYLVGGAVRDALLGLPVKDRDWVVVGATPEQMLDQGYQQVGADFPVFLHPESKEEHALARTERKSGKGYTGFICDFSPDISLEDDLLRRDLTINAMAMDDDGNLVDPFNGRQDLEARILRHVSPAFTEDPLRVLRVARFASRYADLGFTVAPETLQLMQDIQASGELKALTAERVWQETVRALGQKQPRVYFQVLKDAHALQDIFPELNALFGVPQTPQYHPEVDTGLHSLMALEQACLLSEREEVRFAALIHDLGKGVTPQEEWPKHHNHEAVGVDLVKALTERVKAPKLFKELALMACQYHTHCHRALELRANTLVKLLQSCDAWRRPDRFELFLLACEADARGRTGWEQKPYPQADFLRGVLETCQQIQPQELVAQGYTGARLGEEIQRRRISAVKRFKQDNAPEAQEKGGEDVGLT.

ATP is bound by residues glycine 8 and arginine 11. CTP-binding residues include glycine 8 and arginine 11. Mg(2+)-binding residues include aspartate 21 and aspartate 23. Arginine 91, arginine 137, and arginine 140 together coordinate ATP. CTP is bound by residues arginine 91, arginine 137, and arginine 140. The region spanning 228–329 is the HD domain; sequence TGLHSLMALE…VKLLQSCDAW (102 aa). The tract at residues 403-422 is disordered; the sequence is FKQDNAPEAQEKGGEDVGLT.

The protein belongs to the tRNA nucleotidyltransferase/poly(A) polymerase family. Bacterial CCA-adding enzyme type 1 subfamily. As to quaternary structure, monomer. Can also form homodimers and oligomers. The cofactor is Mg(2+). Ni(2+) is required as a cofactor.

The catalysed reaction is a tRNA precursor + 2 CTP + ATP = a tRNA with a 3' CCA end + 3 diphosphate. The enzyme catalyses a tRNA with a 3' CCA end + 2 CTP + ATP = a tRNA with a 3' CCACCA end + 3 diphosphate. In terms of biological role, catalyzes the addition and repair of the essential 3'-terminal CCA sequence in tRNAs without using a nucleic acid template. Adds these three nucleotides in the order of C, C, and A to the tRNA nucleotide-73, using CTP and ATP as substrates and producing inorganic pyrophosphate. tRNA 3'-terminal CCA addition is required both for tRNA processing and repair. Also involved in tRNA surveillance by mediating tandem CCA addition to generate a CCACCA at the 3' terminus of unstable tRNAs. While stable tRNAs receive only 3'-terminal CCA, unstable tRNAs are marked with CCACCA and rapidly degraded. This is Multifunctional CCA protein from Hahella chejuensis (strain KCTC 2396).